Here is a 475-residue protein sequence, read N- to C-terminus: Ataxin-10 (475 aa).

Residue Arg10 is modified to Omega-N-methylarginine. 2 positions are modified to phosphoserine: Ser12 and Ser77. At Thr82 the chain carries Phosphothreonine. The residue at position 430 (Ser430) is a Phosphoserine.

The protein belongs to the ataxin-10 family. As to quaternary structure, homooligomer. Interacts with GNB2. Interacts with IQCB1. Interacts with OGT. In terms of processing, polyubiquitinated. Phosphorylation at Ser-12 by AURKB promotes the association of ATXN10 with PLK1. Phosphorylation at Ser-77 and Thr-82 by PLK1 may play a role in the regulation of cytokinesis and may stimulate the proteasome-mediated degradation of ATXN10.

The protein resides in the cytoplasm. It is found in the perinuclear region. Its subcellular location is the cytoskeleton. It localises to the cilium basal body. The protein localises to the microtubule organizing center. The protein resides in the centrosome. It is found in the centriole. Its subcellular location is the midbody. May play a role in the regulation of cytokinesis. May play a role in signaling by stimulating protein glycosylation. Induces neuritogenesis by activating the Ras-MAP kinase pathway and is necessary for the survival of cerebellar neurons. Does not appear to play a major role in ciliogenesis. This chain is Ataxin-10 (ATXN10), found in Bos taurus (Bovine).